Consider the following 952-residue polypeptide: Leucine--tRNA ligase (952 aa).

Residues 66-77 (PYPSGAGLHVGH) carry the 'HIGH' region motif. Positions 722-726 (KMGKS) match the 'KMSKS' region motif. Position 725 (Lys725) interacts with ATP.

The protein belongs to the class-I aminoacyl-tRNA synthetase family.

The protein resides in the cytoplasm. It carries out the reaction tRNA(Leu) + L-leucine + ATP = L-leucyl-tRNA(Leu) + AMP + diphosphate. This Corynebacterium glutamicum (strain ATCC 13032 / DSM 20300 / JCM 1318 / BCRC 11384 / CCUG 27702 / LMG 3730 / NBRC 12168 / NCIMB 10025 / NRRL B-2784 / 534) protein is Leucine--tRNA ligase.